Here is an 83-residue protein sequence, read N- to C-terminus: U5-theraphotoxin-Hs1a 5 (83 aa).

The signal sequence occupies residues 1–21; the sequence is MKTSMFLTLTGLVLLFVVCYA. The propeptide occupies 22 to 49; sequence SESEEKEFPKELPSSIFAADSDFKVEER. Disulfide bonds link Cys-51–Cys-63, Cys-56–Cys-68, and Cys-62–Cys-75.

It belongs to the neurotoxin 10 (Hwtx-1) family. 51 (Hntx-8) subfamily. Hntx-8 sub-subfamily. In terms of tissue distribution, expressed by the venom gland.

It localises to the secreted. Agglutinates erythrocytes. The polypeptide is U5-theraphotoxin-Hs1a 5 (Cyriopagopus schmidti (Chinese bird spider)).